The following is a 529-amino-acid chain: MGPSCPVFLSFTKLSLWWLLLTPAGGEEAKRPPPRAPGDPLSSPSPTALPQGGSHTETEDRLFKHLFRGYNRWARPVPNTSDVVIVRFGLSIAQLIDVDEKNQMMTTNVWLKQEWSDYKLRWNPADFGNITSLRVPSEMIWIPDIVLYNNADGEFAVTHMTKAHLFSTGTVHWVPPAIYKSSCSIDVTFFPFDQQNCKMKFGSWTYDKAKIDLEQMEQTVDLKDYWESGEWAIVNATGTYNSKKYDCCAEIYPDVTYAFIIRRLPLFYTINLIIPCLLISCLTVLVFYLPSNCGEKITLCISVLLSLTVFLLLITEIIPSTSLVIPLIGEYLLFTMIFVTLSIVITVFVLNVHHRSPSTHTMPHWVRGTLLGCVPRWLLMNRPPPPLELCHPLHLKLSPSYHWLESNVDAEEREVVVEEEDRWACAGHVAPSVGTLCSHGHLHSGASGPKAEALLQEGELLLSPHMQKALEGVHYIADHLRSEDADSSVKEDWKYVAMVIDRIFLWLFIIVCFLGTIGLFLPPFLAGMI.

The N-terminal stretch at 1–26 is a signal peptide; that stretch reads MGPSCPVFLSFTKLSLWWLLLTPAGG. A disordered region spans residues 27-56; that stretch reads EEAKRPPPRAPGDPLSSPSPTALPQGGSHT. Over 27–264 the chain is Extracellular; sequence EEAKRPPPRA…VTYAFIIRRL (238 aa). N-linked (GlcNAc...) asparagine glycosylation is found at Asn-79 and Asn-129. A disulfide bridge links Cys-183 with Cys-197. Asn-235 carries N-linked (GlcNAc...) asparagine glycosylation. A disulfide bridge connects residues Cys-247 and Cys-248. 3 helical membrane passes run 265–289, 297–315, and 331–352; these read PLFY…VFYL, ITLC…LLIT, and YLLF…VLNV. The Cytoplasmic segment spans residues 353 to 502; it reads HHRSPSTHTM…WKYVAMVIDR (150 aa). Residues 503 to 521 form a helical membrane-spanning segment; that stretch reads IFLWLFIIVCFLGTIGLFL.

The protein belongs to the ligand-gated ion channel (TC 1.A.9) family. Acetylcholine receptor (TC 1.A.9.1) subfamily. Alpha-2/CHRNA2 sub-subfamily. In terms of assembly, neuronal AChR is composed of two different types of subunits: alpha and non-alpha (beta). CHRNA2/alpha-2 subunit can be combined to CHRNB2/beta-2 or CHRNB4/beta-4 to give rise to functional receptors. Both CHRNA2:CHRNB2 and CHRNA2:CHRNB4 nAChR complexes are heteropentamers with two subtypes: LS (low agonist sensitivity) with a (CHRNA2)3:(CHRNB2/4)2 and HS (high agonist sensitivity) with a (CHRNA2)2:(CHRNB2/4)3 stoichiometries; the subtypes differ in their subunit binding interfaces which are involved in ligand binding.

Its subcellular location is the synaptic cell membrane. It localises to the cell membrane. It catalyses the reaction Ca(2+)(in) = Ca(2+)(out). The catalysed reaction is K(+)(in) = K(+)(out). The enzyme catalyses Na(+)(in) = Na(+)(out). Functionally, component of neuronal acetylcholine receptors (nAChRs) that function as pentameric, ligand-gated cation channels with high calcium permeability among other activities. nAChRs are excitatory neurotrasnmitter receptors formed by a collection of nAChR subunits known to mediate synaptic transmission in the nervous system and the neuromuscular junction. Each nAchR subunit confers differential attributes to channel properties, including activation, deactivation and desensitization kinetics, pH sensitivity, cation permeability, and binding to allosteric modulators. CHRNA2 forms heteropentameric neuronal acetylcholine receptors with CHRNB2 and CHRNB4 and plays a role in nicotine dependence. The polypeptide is Neuronal acetylcholine receptor subunit alpha-2 (CHRNA2) (Pan troglodytes (Chimpanzee)).